Here is a 559-residue protein sequence, read N- to C-terminus: Protein aurora borealis (559 aa).

The interval 1 to 27 is disordered; that stretch reads MGDVKESKMQITPETPGRIPVLNPFES. Phosphoserine is present on residues S183, S191, S270, S325, and S331. T354 carries the phosphothreonine modification.

This sequence belongs to the BORA family. As to quaternary structure, interacts with AURKA. In terms of processing, phosphorylated by AURKA.

Required for the activation of AURKA at the onset of mitosis. The protein is Protein aurora borealis (BORA) of Homo sapiens (Human).